The chain runs to 363 residues: Lipoyl synthase (363 aa).

Residues Cys55, Cys60, Cys66, Cys81, Cys85, Cys88, and Ser292 each coordinate [4Fe-4S] cluster. Residues 67-281 (WESREATFLI…SKLAKELGFG (215 aa)) form the Radical SAM core domain. Residues 338–363 (PSEETPVTTRMAKTPAQSNSVAATIR) form a disordered region. Polar residues predominate over residues 352-363 (PAQSNSVAATIR).

This sequence belongs to the radical SAM superfamily. Lipoyl synthase family. It depends on [4Fe-4S] cluster as a cofactor.

The protein localises to the cytoplasm. The enzyme catalyses [[Fe-S] cluster scaffold protein carrying a second [4Fe-4S](2+) cluster] + N(6)-octanoyl-L-lysyl-[protein] + 2 oxidized [2Fe-2S]-[ferredoxin] + 2 S-adenosyl-L-methionine + 4 H(+) = [[Fe-S] cluster scaffold protein] + N(6)-[(R)-dihydrolipoyl]-L-lysyl-[protein] + 4 Fe(3+) + 2 hydrogen sulfide + 2 5'-deoxyadenosine + 2 L-methionine + 2 reduced [2Fe-2S]-[ferredoxin]. It participates in protein modification; protein lipoylation via endogenous pathway; protein N(6)-(lipoyl)lysine from octanoyl-[acyl-carrier-protein]: step 2/2. In terms of biological role, catalyzes the radical-mediated insertion of two sulfur atoms into the C-6 and C-8 positions of the octanoyl moiety bound to the lipoyl domains of lipoate-dependent enzymes, thereby converting the octanoylated domains into lipoylated derivatives. The polypeptide is Lipoyl synthase (Corynebacterium aurimucosum (strain ATCC 700975 / DSM 44827 / CIP 107346 / CN-1) (Corynebacterium nigricans)).